Reading from the N-terminus, the 363-residue chain is tRNA N6-adenosine threonylcarbamoyltransferase (363 aa).

Fe cation contacts are provided by histidine 121 and histidine 125. Substrate is bound by residues 143–147, aspartate 176, glycine 189, and asparagine 287; that span reads LASGG. Aspartate 315 is a Fe cation binding site.

Belongs to the KAE1 / TsaD family. It depends on Fe(2+) as a cofactor.

The protein localises to the cytoplasm. It carries out the reaction L-threonylcarbamoyladenylate + adenosine(37) in tRNA = N(6)-L-threonylcarbamoyladenosine(37) in tRNA + AMP + H(+). In terms of biological role, required for the formation of a threonylcarbamoyl group on adenosine at position 37 (t(6)A37) in tRNAs that read codons beginning with adenine. Is involved in the transfer of the threonylcarbamoyl moiety of threonylcarbamoyl-AMP (TC-AMP) to the N6 group of A37, together with TsaE and TsaB. TsaD likely plays a direct catalytic role in this reaction. This is tRNA N6-adenosine threonylcarbamoyltransferase from Rhodopseudomonas palustris (strain ATCC BAA-98 / CGA009).